A 161-amino-acid chain; its full sequence is SsrA-binding protein (161 aa).

Over residues 139–153 (RESIKRKEENRELDR) the composition is skewed to basic and acidic residues. The interval 139 to 161 (RESIKRKEENRELDRLRKRRRQE) is disordered.

Belongs to the SmpB family.

The protein localises to the cytoplasm. In terms of biological role, required for rescue of stalled ribosomes mediated by trans-translation. Binds to transfer-messenger RNA (tmRNA), required for stable association of tmRNA with ribosomes. tmRNA and SmpB together mimic tRNA shape, replacing the anticodon stem-loop with SmpB. tmRNA is encoded by the ssrA gene; the 2 termini fold to resemble tRNA(Ala) and it encodes a 'tag peptide', a short internal open reading frame. During trans-translation Ala-aminoacylated tmRNA acts like a tRNA, entering the A-site of stalled ribosomes, displacing the stalled mRNA. The ribosome then switches to translate the ORF on the tmRNA; the nascent peptide is terminated with the 'tag peptide' encoded by the tmRNA and targeted for degradation. The ribosome is freed to recommence translation, which seems to be the essential function of trans-translation. In Syntrophobacter fumaroxidans (strain DSM 10017 / MPOB), this protein is SsrA-binding protein.